Here is a 658-residue protein sequence, read N- to C-terminus: Glycogen debranching enzyme (658 aa).

The active-site Nucleophile is aspartate 335. Glutamate 370 acts as the Proton donor in catalysis.

This sequence belongs to the glycosyl hydrolase 13 family.

The enzyme catalyses Hydrolysis of (1-&gt;6)-alpha-D-glucosidic linkages to branches with degrees of polymerization of three or four glucose residues in limit dextrin.. It functions in the pathway glycan degradation; glycogen degradation. Functionally, removes maltotriose and maltotetraose chains that are attached by 1,6-alpha-linkage to the limit dextrin main chain, generating a debranched limit dextrin. This Erwinia tasmaniensis (strain DSM 17950 / CFBP 7177 / CIP 109463 / NCPPB 4357 / Et1/99) protein is Glycogen debranching enzyme.